Here is a 481-residue protein sequence, read N- to C-terminus: Betaine aldehyde dehydrogenase 2 (481 aa).

Serine 29 and aspartate 96 together coordinate K(+). 152–154 is a binding site for NAD(+); it reads GAW. Lysine 164 serves as the catalytic Charge relay system. 178-181 provides a ligand contact to NAD(+); sequence KPSE. K(+) is bound at residue valine 182. Residue 231 to 234 coordinates NAD(+); the sequence is SVKT. Isoleucine 246 is a K(+) binding site. Catalysis depends on glutamate 252, which acts as the Proton acceptor. NAD(+)-binding residues include glycine 254, cysteine 286, and glutamate 383. Residue cysteine 286 is the Nucleophile of the active site. Residue cysteine 286 is modified to Cysteine sulfenic acid (-SOH). The K(+) site is built by lysine 453 and glycine 456. Catalysis depends on glutamate 460, which acts as the Charge relay system.

The protein belongs to the aldehyde dehydrogenase family. Dimer of dimers. Requires K(+) as cofactor.

The enzyme catalyses betaine aldehyde + NAD(+) + H2O = glycine betaine + NADH + 2 H(+). Its pathway is amine and polyamine biosynthesis; betaine biosynthesis via choline pathway; betaine from betaine aldehyde: step 1/1. Its function is as follows. Involved in the biosynthesis of the osmoprotectant glycine betaine. Catalyzes the irreversible oxidation of betaine aldehyde to the corresponding acid. This chain is Betaine aldehyde dehydrogenase 2, found in Rhizobium meliloti (strain 1021) (Ensifer meliloti).